Here is a 396-residue protein sequence, read N- to C-terminus: Arginine biosynthesis bifunctional protein ArgJ (396 aa).

Substrate is bound by residues threonine 147, lysine 173, threonine 184, glutamate 270, asparagine 391, and serine 396. Threonine 184 functions as the Nucleophile in the catalytic mechanism.

The protein belongs to the ArgJ family. Heterotetramer of two alpha and two beta chains.

The protein localises to the cytoplasm. The catalysed reaction is N(2)-acetyl-L-ornithine + L-glutamate = N-acetyl-L-glutamate + L-ornithine. It carries out the reaction L-glutamate + acetyl-CoA = N-acetyl-L-glutamate + CoA + H(+). The protein operates within amino-acid biosynthesis; L-arginine biosynthesis; L-ornithine and N-acetyl-L-glutamate from L-glutamate and N(2)-acetyl-L-ornithine (cyclic): step 1/1. It participates in amino-acid biosynthesis; L-arginine biosynthesis; N(2)-acetyl-L-ornithine from L-glutamate: step 1/4. Its function is as follows. Catalyzes two activities which are involved in the cyclic version of arginine biosynthesis: the synthesis of N-acetylglutamate from glutamate and acetyl-CoA as the acetyl donor, and of ornithine by transacetylation between N(2)-acetylornithine and glutamate. The polypeptide is Arginine biosynthesis bifunctional protein ArgJ (Lactococcus lactis subsp. lactis (strain IL1403) (Streptococcus lactis)).